A 217-amino-acid polypeptide reads, in one-letter code: Methylthioribulose-1-phosphate dehydratase (217 aa).

Positions 106 and 108 each coordinate Zn(2+).

It belongs to the aldolase class II family. MtnB subfamily. The cofactor is Zn(2+).

The enzyme catalyses 5-(methylsulfanyl)-D-ribulose 1-phosphate = 5-methylsulfanyl-2,3-dioxopentyl phosphate + H2O. The protein operates within amino-acid biosynthesis; L-methionine biosynthesis via salvage pathway; L-methionine from S-methyl-5-thio-alpha-D-ribose 1-phosphate: step 2/6. Its function is as follows. Catalyzes the dehydration of methylthioribulose-1-phosphate (MTRu-1-P) into 2,3-diketo-5-methylthiopentyl-1-phosphate (DK-MTP-1-P). In Xanthomonas campestris pv. campestris (strain B100), this protein is Methylthioribulose-1-phosphate dehydratase.